The following is an 88-amino-acid chain: MANIKSNEKRLRQDIKRNLNNKGQKTKLKTNVKKFNKEINLDNLSSVYSQADRLARKGIISLNRAKRLKSKNAVILHKSNTNSTAKKQ.

The span at 1-17 shows a compositional bias: basic and acidic residues; that stretch reads MANIKSNEKRLRQDIKR. Residues 1 to 25 are disordered; the sequence is MANIKSNEKRLRQDIKRNLNNKGQK.

This sequence belongs to the bacterial ribosomal protein bS20 family.

In terms of biological role, binds directly to 16S ribosomal RNA. The chain is Small ribosomal subunit protein bS20 from Mycoplasma genitalium (strain ATCC 33530 / DSM 19775 / NCTC 10195 / G37) (Mycoplasmoides genitalium).